A 278-amino-acid chain; its full sequence is Diaminopimelate epimerase (278 aa).

Residues Asn-13, Gln-46, and Asn-66 each contribute to the substrate site. Cys-75 functions as the Proton donor in the catalytic mechanism. Residues 76–77, Asn-159, Asn-192, and 210–211 contribute to the substrate site; these read GN and ER. The active-site Proton acceptor is Cys-219. 220-221 contributes to the substrate binding site; sequence GT.

This sequence belongs to the diaminopimelate epimerase family. As to quaternary structure, homodimer.

It localises to the cytoplasm. It carries out the reaction (2S,6S)-2,6-diaminopimelate = meso-2,6-diaminopimelate. Its pathway is amino-acid biosynthesis; L-lysine biosynthesis via DAP pathway; DL-2,6-diaminopimelate from LL-2,6-diaminopimelate: step 1/1. Functionally, catalyzes the stereoinversion of LL-2,6-diaminopimelate (L,L-DAP) to meso-diaminopimelate (meso-DAP), a precursor of L-lysine and an essential component of the bacterial peptidoglycan. This Laribacter hongkongensis (strain HLHK9) protein is Diaminopimelate epimerase.